Consider the following 70-residue polypeptide: Cold shock-like protein (70 aa).

Residues 5–65 enclose the CSD domain; that stretch reads GTVKWFSKDK…DTKGPRAKNV (61 aa).

It localises to the cytoplasm. The polypeptide is Cold shock-like protein (csp) (Aquifex aeolicus (strain VF5)).